Reading from the N-terminus, the 352-residue chain is Peptide chain release factor 1 (352 aa).

Position 230 is an N5-methylglutamine (Gln-230).

The protein belongs to the prokaryotic/mitochondrial release factor family. Methylated by PrmC. Methylation increases the termination efficiency of RF1.

It localises to the cytoplasm. In terms of biological role, peptide chain release factor 1 directs the termination of translation in response to the peptide chain termination codons UAG and UAA. In Exiguobacterium sibiricum (strain DSM 17290 / CCUG 55495 / CIP 109462 / JCM 13490 / 255-15), this protein is Peptide chain release factor 1.